Here is an 855-residue protein sequence, read N- to C-terminus: DNA polymerase (855 aa).

One can recognise a 3'-5' exonuclease domain in the interval 107-332 (KPEMKPVFDA…LHNFFLPKIE (226 aa)). Residues 333 to 833 (KNEKLCSLYY…MDKEHPDHSK (501 aa)) are polymerase.

It belongs to the DNA polymerase type-A family. As to quaternary structure, single-chain monomer with multiple functions.

The enzyme catalyses DNA(n) + a 2'-deoxyribonucleoside 5'-triphosphate = DNA(n+1) + diphosphate. Functionally, replicates the viral genomic DNA. This polymerase possesses two enzymatic activities: DNA synthesis (polymerase) and an exonucleolytic activity that degrades single-stranded DNA in the 3'-5' direction for proofreading purpose. The DNA synthesis very likely occurs by strand displacement. The protein is DNA polymerase of Escherichia phage T5 (Enterobacteria phage T5).